We begin with the raw amino-acid sequence, 428 residues long: Tryptophan synthase beta chain (428 aa).

The residue at position 92 (Lys92) is an N6-(pyridoxal phosphate)lysine.

This sequence belongs to the TrpB family. As to quaternary structure, tetramer of two alpha and two beta chains. Pyridoxal 5'-phosphate serves as cofactor.

It catalyses the reaction (1S,2R)-1-C-(indol-3-yl)glycerol 3-phosphate + L-serine = D-glyceraldehyde 3-phosphate + L-tryptophan + H2O. It participates in amino-acid biosynthesis; L-tryptophan biosynthesis; L-tryptophan from chorismate: step 5/5. Its function is as follows. The beta subunit is responsible for the synthesis of L-tryptophan from indole and L-serine. This is Tryptophan synthase beta chain from Leptothrix cholodnii (strain ATCC 51168 / LMG 8142 / SP-6) (Leptothrix discophora (strain SP-6)).